Here is a 686-residue protein sequence, read N- to C-terminus: Cadmium, zinc and cobalt-transporting ATPase (686 aa).

Positions 1-62 (MQEYHIHNLD…FIKQNEPHLS (62 aa)) constitute an HMA domain. Over 1–72 (MQEYHIHNLD…LSFKEATEKP (72 aa)) the chain is Cytoplasmic. Residues Cys-11 and Cys-14 each coordinate Cd(2+). Cys-11 and Cys-14 together coordinate Co(2+). The Zn(2+) site is built by Cys-11 and Cys-14. A helical membrane pass occupies residues 73 to 92 (LSFTPLIITIMVFLGAILIL). The Extracellular segment spans residues 93 to 102 (HLNPSPLIEK). A helical transmembrane segment spans residues 103–124 (AMFFVLALVYLVSGKDVILGAF). The Cytoplasmic portion of the chain corresponds to 125–131 (RGLRKGQ). The chain crosses the membrane as a helical span at residues 132–151 (FFDENALMLIATIAAFFVGA). Residues 152 to 154 (YEE) lie on the Extracellular side of the membrane. A helical membrane pass occupies residues 155-174 (SVSIMVFYSAGEFLQKLAVS). The Cytoplasmic portion of the chain corresponds to 175 to 308 (RSKKSLKALV…ITKFSRYYTP (134 aa)). Residues 309–327 (SVLFIALMIAVLPPLFSMG) form a helical membrane-spanning segment. Residues 328 to 332 (SFDEW) are Extracellular-facing. The chain crosses the membrane as a helical span at residues 333-350 (IYRGLVALMVSCPCALVI). Residues 351–635 (SVPLGYFGGV…VLAIAKKTKS (285 aa)) lie on the Cytoplasmic side of the membrane. Asp-388 (4-aspartylphosphate intermediate) is an active-site residue. Mg(2+) contacts are provided by Asp-583 and Asp-587. A helical membrane pass occupies residues 636–657 (IIWQNILFALGIKAVFIVLGLM). The Extracellular portion of the chain corresponds to 658–665 (GVASLWEA). The helical transmembrane segment at 666 to 681 (VFGDVGVTLLALANSM) threads the bilayer. Residues 682–686 (RAMRA) are Cytoplasmic-facing.

Belongs to the cation transport ATPase (P-type) (TC 3.A.3) family. Type IB subfamily.

The protein localises to the cell membrane. It catalyses the reaction Zn(2+)(in) + ATP + H2O = Zn(2+)(out) + ADP + phosphate + H(+). The catalysed reaction is Cd(2+)(in) + ATP + H2O = Cd(2+)(out) + ADP + phosphate + H(+). In terms of biological role, couples the hydrolysis of ATP with the transport of cadmium, zinc and cobalt out of the cell. This ion efflux may influence the activity of urease, which is essential for the survival of the bacterium in the gastric environment. The polypeptide is Cadmium, zinc and cobalt-transporting ATPase (cadA) (Helicobacter pylori (strain ATCC 700392 / 26695) (Campylobacter pylori)).